A 129-amino-acid chain; its full sequence is Large ribosomal subunit protein uL14m (129 aa).

Belongs to the universal ribosomal protein uL14 family. Component of the mitochondrial ribosome large subunit (39S) which comprises a 16S rRNA and about 50 distinct proteins.

Its subcellular location is the mitochondrion. The protein is Large ribosomal subunit protein uL14m (mrpl14) of Dictyostelium discoideum (Social amoeba).